Reading from the N-terminus, the 204-residue chain is uncharacterized protein (204 aa).

Positions 1–16 (MKYTFLAVLSAVTVLA) are cleaved as a signal peptide.

The protein resides in the secreted. This is an uncharacterized protein from Arthroderma benhamiae (strain ATCC MYA-4681 / CBS 112371) (Trichophyton mentagrophytes).